The following is a 367-amino-acid chain: MTLSSLGWDDFFAGAFQPFASENFLPARVALEHKHACVLLSARGEITATCTGRLLHETATRAALPAVGDWVAVRLRPESLASGAGVALVGDIHAVLPRRTAFTRRAVGDADAEQVLATNVDTVFLVTGLDRDFNLRRIERYLAVARASEAQPVVVLNKSDLHPDARGAEAEVRRITRTAPVVTLSAARGDGIAALAPWLVPGATVALLGSSGAGKSTLINRLLGKQRQDTGPLSHAMNKGRHTTTHRELLALPGGALVIDTPGLRELQLWGVDESAVAETFPEVAALAAECRFPDCTHQREPGCAVRAALDDGTLDPTRWASYEKLQREQAYAARRVDPVLARAERDRWKKIYQGQRARERIEGRWE.

In terms of domain architecture, CP-type G spans 112–267 (AEQVLATNVD…VIDTPGLREL (156 aa)). GTP contacts are provided by residues 157 to 160 (NKSD) and 209 to 217 (GSSGAGKST). Positions 291, 296, 298, and 304 each coordinate Zn(2+).

The protein belongs to the TRAFAC class YlqF/YawG GTPase family. RsgA subfamily. Monomer. Associates with 30S ribosomal subunit, binds 16S rRNA. The cofactor is Zn(2+).

The protein localises to the cytoplasm. One of several proteins that assist in the late maturation steps of the functional core of the 30S ribosomal subunit. Helps release RbfA from mature subunits. May play a role in the assembly of ribosomal proteins into the subunit. Circularly permuted GTPase that catalyzes slow GTP hydrolysis, GTPase activity is stimulated by the 30S ribosomal subunit. The chain is Small ribosomal subunit biogenesis GTPase RsgA from Opitutus terrae (strain DSM 11246 / JCM 15787 / PB90-1).